The following is a 564-amino-acid chain: MFS-type transporter dmxR4 (564 aa).

Residues 1–61 are disordered; sequence MSSERPDGSA…PAKEAPAKPA (61 aa). Polar residues predominate over residues 25-44; sequence TDSSRTSNDASQTSQDTAVQ. Residues 47–57 show a composition bias toward basic and acidic residues; sequence PPKEAPAKEAP. 5 consecutive transmembrane segments (helical) span residues 71-91, 106-126, 138-158, 169-189, and 199-219; these read IALL…DRSI, AGDI…FQLL, TVFV…GAAP, LAGI…VFLI, and GLFG…GGGF. The N-linked (GlcNAc...) asparagine glycan is linked to N222. Helical transmembrane passes span 227–247, 265–285, 299–319, 348–368, 376–396, 405–425, and 438–458; these read WCFY…ALWM, GLDL…LLAL, IIAL…LQAF, GVHL…GGFF, SPLA…IYTF, WIGS…APNL, and SALA…VSVG. Residue N469 is glycosylated (N-linked (GlcNAc...) asparagine). Transmembrane regions (helical) follow at residues 470-490 and 512-532; these read LSWI…VSFL and VFMI…SMEW. Residues 534–564 form a disordered region; that stretch reads SVKSRGSWDEKPAAKPTDKPTEEKKVPPEAV. The span at 539–564 shows a compositional bias: basic and acidic residues; it reads GSWDEKPAAKPTDKPTEEKKVPPEAV.

The protein belongs to the major facilitator superfamily. TCR/Tet family.

Its subcellular location is the membrane. Its function is as follows. MFS-type transporter; part of the gene cluster that mediates the biosynthesis of the dimeric xanthones cryptosporioptides. The protein is MFS-type transporter dmxR4 of Cryptosporiopsis sp. (strain 8999).